A 900-amino-acid polypeptide reads, in one-letter code: Isoleucine--tRNA ligase (900 aa).

Residues 59–69 (PYANGNIHMGH) carry the 'HIGH' region motif. Residue E550 participates in L-isoleucyl-5'-AMP binding. Positions 591–595 (KMSKS) match the 'KMSKS' region motif. K594 contacts ATP. Zn(2+)-binding residues include C876, C879, C892, and C895.

Belongs to the class-I aminoacyl-tRNA synthetase family. IleS type 1 subfamily. Monomer. It depends on Zn(2+) as a cofactor.

The protein localises to the cytoplasm. The enzyme catalyses tRNA(Ile) + L-isoleucine + ATP = L-isoleucyl-tRNA(Ile) + AMP + diphosphate. Functionally, catalyzes the attachment of isoleucine to tRNA(Ile). As IleRS can inadvertently accommodate and process structurally similar amino acids such as valine, to avoid such errors it has two additional distinct tRNA(Ile)-dependent editing activities. One activity is designated as 'pretransfer' editing and involves the hydrolysis of activated Val-AMP. The other activity is designated 'posttransfer' editing and involves deacylation of mischarged Val-tRNA(Ile). In Onion yellows phytoplasma (strain OY-M), this protein is Isoleucine--tRNA ligase.